Consider the following 130-residue polypeptide: ATP synthase epsilon chain (130 aa).

This sequence belongs to the ATPase epsilon chain family. As to quaternary structure, F-type ATPases have 2 components, CF(1) - the catalytic core - and CF(0) - the membrane proton channel. CF(1) has five subunits: alpha(3), beta(3), gamma(1), delta(1), epsilon(1). CF(0) has three main subunits: a, b and c.

It localises to the cell inner membrane. Its function is as follows. Produces ATP from ADP in the presence of a proton gradient across the membrane. This is ATP synthase epsilon chain from Campylobacter hominis (strain ATCC BAA-381 / DSM 21671 / CCUG 45161 / LMG 19568 / NCTC 13146 / CH001A).